Here is a 107-residue protein sequence, read N- to C-terminus: MREFQRAAVRLHILHHAADNEVHGAWLTQELSRHGYRVSPGTLYPTLHRLEADGLLVSEQRVVDGRARRVYRATPAGRAALTEDRRALEELAREVLGGQSHTAGNGT.

Cd(2+) contacts are provided by histidine 16, glutamate 30, histidine 34, and histidine 101.

As to quaternary structure, homodimer.

May have transcription regulation and metal-detoxifying functions through which it may enhance intracellular survival of mycobacteria. Binds to its own promoter region and to the Rv1999c promoter region. It displays strong affinity for cadmium ions, but can also bind zinc, manganese and nickel. Expression increases the intracellular survival of recombinant M.smegmatis in murine macrophage cell line and increases its tolerance to cadmium ions. This is Transcriptional regulator Rv3488 from Mycobacterium tuberculosis (strain ATCC 25618 / H37Rv).